A 309-amino-acid polypeptide reads, in one-letter code: Homoserine O-succinyltransferase (309 aa).

Cys142 (acyl-thioester intermediate) is an active-site residue. Lys163 and Ser192 together coordinate substrate. Residue His235 is the Proton acceptor of the active site. Glu237 is an active-site residue. Arg249 is a substrate binding site.

The protein belongs to the MetA family.

It localises to the cytoplasm. The catalysed reaction is L-homoserine + succinyl-CoA = O-succinyl-L-homoserine + CoA. Its pathway is amino-acid biosynthesis; L-methionine biosynthesis via de novo pathway; O-succinyl-L-homoserine from L-homoserine: step 1/1. Its function is as follows. Transfers a succinyl group from succinyl-CoA to L-homoserine, forming succinyl-L-homoserine. The protein is Homoserine O-succinyltransferase of Yersinia pseudotuberculosis serotype O:1b (strain IP 31758).